Reading from the N-terminus, the 412-residue chain is Mannose-1-phosphate guanylyltransferase regulatory subunit alpha (412 aa).

Residues 6–259 form a substrate-binding domain region; that stretch reads TKAIILVGGP…VGFWRQIKNA (254 aa). Residues Glu-88 and Gln-255 each contribute to the GDP-alpha-D-mannose site. Residues 281–412 are hexapeptide repeat domain; that stretch reads LKKGNNIIGN…DRNYNNEIIL (132 aa).

This sequence belongs to the transferase hexapeptide repeat family. As to quaternary structure, component of the GMPPA-GMPPB mannose-1-phosphate guanylyltransferase complex composed of 4 gmppA subunits and 8 gmppB subunits; the complex is organized into three layers, a central layer made up of 2 gmppA dimers sandwiched between two layers each made up of 2 gmppB dimers.

Functionally, regulatory subunit of the GMPPA-GMPPB mannose-1-phosphate guanylyltransferase complex; reduces the catalytic activity of GMPPB when part of the complex. Mediates allosteric feedback inhibition of GMPPB catalytic activity upon binding GDP-alpha-D-mannose. Together with GMPPB regulates GDP-alpha-D-mannose levels. This Dictyostelium discoideum (Social amoeba) protein is Mannose-1-phosphate guanylyltransferase regulatory subunit alpha (gmppA).